Here is a 195-residue protein sequence, read N- to C-terminus: MKLLHLDASVLGDNSVSRQLSAAVVARFTGQIDGLQVDYRDLDANPVPHLRSSSLARTDAAEATDAEQVMQQFLDADIVVIGAPMYNFSIPSTLKAWIDRVAVAGRTFKYTENGPVGLASGKRVIIASSRGGIYTDSPADFQEPFLRQVFAFMGINEVEFVRAEGIAYSPQHREDAIAGALAALPSHEVVEAVAA.

Residues Ser9, Ser15–Ser17, Met85–Phe88, and Ser129–Gly132 each bind FMN.

The protein belongs to the azoreductase type 1 family. As to quaternary structure, homodimer. FMN serves as cofactor.

It carries out the reaction 2 a quinone + NADH + H(+) = 2 a 1,4-benzosemiquinone + NAD(+). The catalysed reaction is N,N-dimethyl-1,4-phenylenediamine + anthranilate + 2 NAD(+) = 2-(4-dimethylaminophenyl)diazenylbenzoate + 2 NADH + 2 H(+). In terms of biological role, quinone reductase that provides resistance to thiol-specific stress caused by electrophilic quinones. Also exhibits azoreductase activity. Catalyzes the reductive cleavage of the azo bond in aromatic azo compounds to the corresponding amines. In Stenotrophomonas maltophilia (strain K279a), this protein is FMN-dependent NADH:quinone oxidoreductase.